Reading from the N-terminus, the 439-residue chain is COBRA-like protein 7 (439 aa).

The signal sequence occupies residues Met-1–Ala-22. N-linked (GlcNAc...) asparagine glycans are attached at residues Asn-138, Asn-181, Asn-186, Asn-232, Asn-312, and Asn-346. Asn-412 carries GPI-anchor amidated asparagine lipidation. A propeptide spans Gly-413–Met-439 (removed in mature form).

It belongs to the COBRA family.

Its subcellular location is the cell membrane. In terms of biological role, involved in determining the orientation of cell expansion, probably by playing an important role in cellulose deposition. May act by recruiting cellulose synthesizing complexes to discrete positions on the cell surface. This Oryza sativa subsp. japonica (Rice) protein is COBRA-like protein 7 (BC1LP1).